The primary structure comprises 431 residues: Glutamate--tRNA ligase 1 (431 aa).

The 'HIGH' region motif lies at 6-16; the sequence is PSPTGDMHIGN. The short motif at 235–239 is the 'KMSKS' region element; it reads KMSKR. Position 238 (K238) interacts with ATP.

It belongs to the class-I aminoacyl-tRNA synthetase family. Glutamate--tRNA ligase type 1 subfamily. As to quaternary structure, monomer.

Its subcellular location is the cytoplasm. It carries out the reaction tRNA(Glu) + L-glutamate + ATP = L-glutamyl-tRNA(Glu) + AMP + diphosphate. Its function is as follows. Catalyzes the attachment of glutamate to tRNA(Glu) in a two-step reaction: glutamate is first activated by ATP to form Glu-AMP and then transferred to the acceptor end of tRNA(Glu). This chain is Glutamate--tRNA ligase 1, found in Campylobacter jejuni subsp. jejuni serotype O:6 (strain 81116 / NCTC 11828).